The following is a 109-amino-acid chain: Large ribosomal subunit protein uL22 (109 aa).

Belongs to the universal ribosomal protein uL22 family. As to quaternary structure, part of the 50S ribosomal subunit.

Its function is as follows. This protein binds specifically to 23S rRNA; its binding is stimulated by other ribosomal proteins, e.g. L4, L17, and L20. It is important during the early stages of 50S assembly. It makes multiple contacts with different domains of the 23S rRNA in the assembled 50S subunit and ribosome. The globular domain of the protein is located near the polypeptide exit tunnel on the outside of the subunit, while an extended beta-hairpin is found that lines the wall of the exit tunnel in the center of the 70S ribosome. This chain is Large ribosomal subunit protein uL22, found in Laribacter hongkongensis (strain HLHK9).